The chain runs to 123 residues: SOSS complex subunit C homolog (123 aa).

It belongs to the SOSS-C family.

The protein is SOSS complex subunit C homolog of Drosophila ananassae (Fruit fly).